Consider the following 351-residue polypeptide: Outer membrane porin protein 32 (351 aa).

The N-terminal stretch at 1 to 19 (MKKSLIALAVLAASGAAMA) is a signal peptide. The residue at position 20 (Q20) is a Pyrrolidone carboxylic acid.

This sequence to bacterial outer membrane proteins and porins. In terms of assembly, homotrimer.

The protein localises to the cell outer membrane. Forms anion selective channels. The protein is Outer membrane porin protein 32 (omp32) of Delftia acidovorans (Pseudomonas acidovorans).